The chain runs to 95 residues: Small ribosomal subunit protein bS18 (95 aa).

The protein belongs to the bacterial ribosomal protein bS18 family. As to quaternary structure, part of the 30S ribosomal subunit. Forms a tight heterodimer with protein bS6.

Binds as a heterodimer with protein bS6 to the central domain of the 16S rRNA, where it helps stabilize the platform of the 30S subunit. The polypeptide is Small ribosomal subunit protein bS18 (Rickettsia massiliae (strain Mtu5)).